Reading from the N-terminus, the 392-residue chain is Queuine tRNA-ribosyltransferase (392 aa).

D93 serves as the catalytic Proton acceptor. Substrate-binding positions include 93 to 97, D147, Q189, and G216; that span reads DSGGY. Residues 247–253 are RNA binding; it reads GVGAPED. Residue D266 is the Nucleophile of the active site. The interval 271–275 is RNA binding; important for wobble base 34 recognition; that stretch reads TRVAR. Residues C304, C306, C309, and H335 each coordinate Zn(2+).

It belongs to the queuine tRNA-ribosyltransferase family. Homodimer. Within each dimer, one monomer is responsible for RNA recognition and catalysis, while the other monomer binds to the replacement base PreQ1. Zn(2+) serves as cofactor.

The catalysed reaction is 7-aminomethyl-7-carbaguanine + guanosine(34) in tRNA = 7-aminomethyl-7-carbaguanosine(34) in tRNA + guanine. It functions in the pathway tRNA modification; tRNA-queuosine biosynthesis. Functionally, catalyzes the base-exchange of a guanine (G) residue with the queuine precursor 7-aminomethyl-7-deazaguanine (PreQ1) at position 34 (anticodon wobble position) in tRNAs with GU(N) anticodons (tRNA-Asp, -Asn, -His and -Tyr). Catalysis occurs through a double-displacement mechanism. The nucleophile active site attacks the C1' of nucleotide 34 to detach the guanine base from the RNA, forming a covalent enzyme-RNA intermediate. The proton acceptor active site deprotonates the incoming PreQ1, allowing a nucleophilic attack on the C1' of the ribose to form the product. After dissociation, two additional enzymatic reactions on the tRNA convert PreQ1 to queuine (Q), resulting in the hypermodified nucleoside queuosine (7-(((4,5-cis-dihydroxy-2-cyclopenten-1-yl)amino)methyl)-7-deazaguanosine). The polypeptide is Queuine tRNA-ribosyltransferase (Dehalococcoides mccartyi (strain ATCC BAA-2100 / JCM 16839 / KCTC 5957 / BAV1)).